The primary structure comprises 428 residues: Adenylosuccinate synthetase 1 (428 aa).

Residues 12–18 (GDEGKGK) and 40–42 (GHT) each bind GTP. Aspartate 13 serves as the catalytic Proton acceptor. Positions 13 and 40 each coordinate Mg(2+). Residues 13 to 16 (DEGK), 38 to 41 (NAGH), threonine 133, arginine 147, asparagine 224, threonine 239, and arginine 303 each bind IMP. Histidine 41 (proton donor) is an active-site residue. 299–305 (TTTGRRR) provides a ligand contact to substrate. GTP contacts are provided by residues arginine 305, 331–333 (KLD), and 413–415 (GVG).

The protein belongs to the adenylosuccinate synthetase family. Homodimer. The cofactor is Mg(2+).

It localises to the cytoplasm. The catalysed reaction is IMP + L-aspartate + GTP = N(6)-(1,2-dicarboxyethyl)-AMP + GDP + phosphate + 2 H(+). The protein operates within purine metabolism; AMP biosynthesis via de novo pathway; AMP from IMP: step 1/2. Functionally, plays an important role in the de novo pathway and in the salvage pathway of purine nucleotide biosynthesis. Catalyzes the first committed step in the biosynthesis of AMP from IMP. This chain is Adenylosuccinate synthetase 1, found in Laccaria bicolor (strain S238N-H82 / ATCC MYA-4686) (Bicoloured deceiver).